Consider the following 461-residue polypeptide: ATP-dependent protease ATPase subunit HslU (461 aa).

ATP-binding positions include I18 and 60-65; that span reads GVGKTE. The disordered stretch occupies residues 157-178; it reads EGSSVKPEPTAQQKESRQKMRK. ATP contacts are provided by D273, E339, and R411.

It belongs to the ClpX chaperone family. HslU subfamily. In terms of assembly, a double ring-shaped homohexamer of HslV is capped on each side by a ring-shaped HslU homohexamer. The assembly of the HslU/HslV complex is dependent on binding of ATP.

The protein resides in the cytoplasm. Its function is as follows. ATPase subunit of a proteasome-like degradation complex; this subunit has chaperone activity. The binding of ATP and its subsequent hydrolysis by HslU are essential for unfolding of protein substrates subsequently hydrolyzed by HslV. HslU recognizes the N-terminal part of its protein substrates and unfolds these before they are guided to HslV for hydrolysis. This is ATP-dependent protease ATPase subunit HslU from Magnetococcus marinus (strain ATCC BAA-1437 / JCM 17883 / MC-1).